The primary structure comprises 394 residues: DNA replication and repair protein RecF (394 aa).

30–37 (GRNGFGKT) is a binding site for ATP.

This sequence belongs to the RecF family.

It is found in the cytoplasm. The RecF protein is involved in DNA metabolism; it is required for DNA replication and normal SOS inducibility. RecF binds preferentially to single-stranded, linear DNA. It also seems to bind ATP. This is DNA replication and repair protein RecF from Corynebacterium glutamicum (strain R).